The sequence spans 87 residues: UPF0248 protein TSIB_1445 (87 aa).

The protein belongs to the UPF0248 family.

In Thermococcus sibiricus (strain DSM 12597 / MM 739), this protein is UPF0248 protein TSIB_1445.